Reading from the N-terminus, the 446-residue chain is Tubulin gamma chain (446 aa).

142-148 (AGGTGSG) is a GTP binding site.

Belongs to the tubulin family.

The protein resides in the cytoplasm. It is found in the cytoskeleton. It localises to the microtubule organizing center. The protein localises to the spindle pole body. Its function is as follows. Tubulin is the major constituent of microtubules. The gamma chain is found at microtubule organizing centers (MTOC) such as the spindle poles or the centrosome, suggesting that it is involved in the minus-end nucleation of microtubule assembly. This chain is Tubulin gamma chain (tug1), found in Schizosaccharomyces japonicus (Fission yeast).